Here is a 463-residue protein sequence, read N- to C-terminus: Rop guanine nucleotide exchange factor 4 (463 aa).

2 disordered regions span residues 1–25 (MESSSNSDQNEGTPTSSVSSPYRRT) and 55–87 (GHEEDVSEDAEEPKDDVVNDVHGDGDEEDSDID). Residues 59–68 (DVSEDAEEPK) show a composition bias toward acidic residues. Residues 69-78 (DDVVNDVHGD) show a composition bias toward basic and acidic residues. One can recognise a PRONE domain in the interval 84-463 (SDIDSAEDAE…VDRTVRNRDD (380 aa)).

In terms of assembly, interacts with ARAC10/ROP11. In terms of tissue distribution, expressed in root vascular tissue and trichoblast cell files. Expressed in root metaxylem cell files. Expressed in guard cells of cotyledons, rosette leaves, sepals, petal, stigmas and siliques. Expressed in root metaxylem cell files.

It is found in the cytoplasm. The protein localises to the cell membrane. In terms of biological role, guanine-nucleotide exchange factor (GEF) that acts as an activator of Rop (Rho of plants) GTPases by promoting the exchange of GDP for GTP. In association with ROPGEF1, acts as a specific regulator of ARAC10/ROP11 function in ABA-mediated stomatal closure. This chain is Rop guanine nucleotide exchange factor 4 (ROPGEF4), found in Arabidopsis thaliana (Mouse-ear cress).